The sequence spans 263 residues: Tryptophan synthase alpha chain (263 aa).

Active-site proton acceptor residues include E49 and D60.

This sequence belongs to the TrpA family. Tetramer of two alpha and two beta chains.

It carries out the reaction (1S,2R)-1-C-(indol-3-yl)glycerol 3-phosphate + L-serine = D-glyceraldehyde 3-phosphate + L-tryptophan + H2O. The protein operates within amino-acid biosynthesis; L-tryptophan biosynthesis; L-tryptophan from chorismate: step 5/5. In terms of biological role, the alpha subunit is responsible for the aldol cleavage of indoleglycerol phosphate to indole and glyceraldehyde 3-phosphate. The sequence is that of Tryptophan synthase alpha chain from Roseobacter denitrificans (strain ATCC 33942 / OCh 114) (Erythrobacter sp. (strain OCh 114)).